A 193-amino-acid polypeptide reads, in one-letter code: Ion-translocating oxidoreductase complex subunit A (193 aa).

6 helical membrane passes run 5–25 (LLLL…FLGL), 39–59 (IGMS…SYLV), 72–92 (LTTM…EMVV), 102–122 (LLGI…VALL), 134–154 (IIYG…FSAM), and 171–191 (AIAM…TGLV).

The protein belongs to the NqrDE/RnfAE family. In terms of assembly, the complex is composed of six subunits: RnfA, RnfB, RnfC, RnfD, RnfE and RnfG.

The protein resides in the cell inner membrane. Functionally, part of a membrane-bound complex that couples electron transfer with translocation of ions across the membrane. The chain is Ion-translocating oxidoreductase complex subunit A from Colwellia psychrerythraea (strain 34H / ATCC BAA-681) (Vibrio psychroerythus).